The chain runs to 240 residues: Dephospho-CoA kinase domain-containing protein (240 aa).

One can recognise a DPCK domain in the interval 3–207 (LVGLTGGIAS…RSMEYLPLRL (205 aa)). 8–15 (GGIASGKS) lines the ATP pocket.

This sequence belongs to the CoaE family.

The polypeptide is Dephospho-CoA kinase domain-containing protein (Dcakd) (Rattus norvegicus (Rat)).